A 402-amino-acid polypeptide reads, in one-letter code: Calcium-responsive transactivator (402 aa).

The N-terminal auto-inhibitory domain; necessary for interaction with SMARCA4/BRG1 stretch occupies residues Met-1–Ser-148. The short motif at Tyr-50–Ile-53 is the SH2-binding element. Disordered regions lie at residues Gln-72–His-129, Pro-141–Leu-170, Met-195–Gln-250, Gln-262–Ala-290, and Thr-305–Gln-402. Positions Gln-92–Ser-106 are enriched in low complexity. Residues Ser-117–His-129 are compositionally biased toward polar residues. Residues Gly-149 to Met-237 form a methionine-rich intra-molecular domain region. The segment covering His-196–Gln-224 has biased composition (low complexity). The interval Tyr-251–Tyr-323 is MFD domain. 2 stretches are compositionally biased toward low complexity: residues Gly-311–Gln-379 and Tyr-390–Gln-402. The necessary for nuclear localization stretch occupies residues Asn-340–Gln-402. An SH2-binding motif is present at residues Ser-359–Ser-362. The short motif at Ala-377–Gln-385 is the SH3-binding element. A necessary for interaction with CREBBP and for the recruitment of CREBBP to the nuclear bodies region spans residues Glu-393–Gln-402. The SH2-binding signature appears at Tyr-397–Tyr-400.

Belongs to the SS18 family. In terms of assembly, homodimer. Dimerization may be necessary for its function in neuronal dendritic development. Interacts (via C-terminus) with CREBBP (via N-terminus), EP300 and SMARCA4/BRG1. Interacts with the nBAF complex. Association with CREBBP facilitates transcription while the association with SMARCA4/BRG1 suppresses CREST-mediated transcription in resting neurons.

The protein resides in the nucleus. The protein localises to the chromosome. It localises to the centromere. Its subcellular location is the kinetochore. Transcriptional activator which is required for calcium-dependent dendritic growth and branching in cortical neurons. Recruits CREB-binding protein (CREBBP) to nuclear bodies. Component of the CREST-BRG1 complex, a multiprotein complex that regulates promoter activation by orchestrating a calcium-dependent release of a repressor complex and a recruitment of an activator complex. In resting neurons, transcription of the c-FOS promoter is inhibited by BRG1-dependent recruitment of a phospho-RB1-HDAC1 repressor complex. Upon calcium influx, RB1 is dephosphorylated by calcineurin, which leads to release of the repressor complex. At the same time, there is increased recruitment of CREBBP to the promoter by a CREST-dependent mechanism, which leads to transcriptional activation. The CREST-BRG1 complex also binds to the NR2B promoter, and activity-dependent induction of NR2B expression involves a release of HDAC1 and recruitment of CREBBP. In Bos taurus (Bovine), this protein is Calcium-responsive transactivator (SS18L1).